Consider the following 186-residue polypeptide: Protein FAM9B (186 aa).

Residues 1 to 93 (MAAWGKKHAG…KHALRKKQLK (93 aa)) form a disordered region. Composition is skewed to basic and acidic residues over residues 10-27 (GKDP…FTET) and 34-58 (DEHG…KPED). Residues 66–93 (KRKRMKMDKTCSKTKNKSKHALRKKQLK) are compositionally biased toward basic residues.

This sequence belongs to the XLR/SYCP3 family. In terms of tissue distribution, expressed in testis and ovary (at protein level).

The protein resides in the nucleus. It localises to the cytoplasm. Its subcellular location is the chromosome. Functionally, may play a role in meiosis. This is Protein FAM9B from Homo sapiens (Human).